We begin with the raw amino-acid sequence, 1189 residues long: Pyruvate carboxylase (1189 aa).

Residues 21–473 form the Biotin carboxylation domain; it reads TMNKILVANR…WTTFIDDTPE (453 aa). ATP contacts are provided by lysine 139, glutamate 223, and histidine 258. The ATP-grasp domain occupies 143 to 340; it reads RNLAYAANVP…IVAAQIQIAA (198 aa). Arginine 315 is an active-site residue. One can recognise a Pyruvate carboxyltransferase domain in the interval 559 to 826; it reads LMIMDTTWRD…ETGIPEANAR (268 aa). Substrate contacts are provided by residues 567–571 and arginine 640; that span reads RDAHQ. An a divalent metal cation-binding site is contributed by aspartate 568. The a divalent metal cation site is built by lysine 736, histidine 766, and histidine 768. An N6-carboxylysine modification is found at lysine 736. Substrate is bound at residue threonine 900. Residues 1099–1174 enclose the Biotinyl-binding domain; that stretch reads KADAHNPNEI…DASDLIPKSS (76 aa). The residue at position 1140 (lysine 1140) is an N6-biotinyllysine.

Biotin serves as cofactor. Requires Zn(2+) as cofactor.

Its subcellular location is the cytoplasm. It catalyses the reaction hydrogencarbonate + pyruvate + ATP = oxaloacetate + ADP + phosphate + H(+). Its pathway is carbohydrate biosynthesis; gluconeogenesis. In terms of biological role, pyruvate carboxylase catalyzes a 2-step reaction, involving the ATP-dependent carboxylation of the covalently attached biotin in the first step and the transfer of the carboxyl group to pyruvate in the second. The sequence is that of Pyruvate carboxylase (PYC1) from Komagataella pastoris (Yeast).